We begin with the raw amino-acid sequence, 96 residues long: Uteroglobin (96 aa).

Residues 1-21 form the signal peptide; sequence MKIAITITVVMLSICCSSASS.

This sequence belongs to the secretoglobin family. Antiparallel homodimer; disulfide-linked. Interaction with LMBR1L is controversial. Club cells (nonciliated cells of the surface epithelium of the pulmonary airways).

The protein localises to the secreted. Functionally, binds phosphatidylcholine, phosphatidylinositol, polychlorinated biphenyls (PCB) and weakly progesterone, potent inhibitor of phospholipase A2. This is Uteroglobin (Scgb1a1) from Mus musculus (Mouse).